A 481-amino-acid chain; its full sequence is Cysteine--tRNA ligase (481 aa).

Cys27 is a binding site for Zn(2+). Residues 29 to 39 (PTVYNYAHIGN) carry the 'HIGH' region motif. Zn(2+)-binding residues include Cys222, His247, and Glu251. Residues 279–283 (KMSKS) carry the 'KMSKS' region motif. Lys282 serves as a coordination point for ATP.

Belongs to the class-I aminoacyl-tRNA synthetase family. Monomer. It depends on Zn(2+) as a cofactor.

The protein localises to the cytoplasm. It catalyses the reaction tRNA(Cys) + L-cysteine + ATP = L-cysteinyl-tRNA(Cys) + AMP + diphosphate. The sequence is that of Cysteine--tRNA ligase from Borrelia hermsii (strain HS1 / DAH).